The sequence spans 655 residues: Acetyl-coenzyme A synthetase (655 aa).

CoA is bound by residues 196-199 (RGGR) and Thr316. ATP-binding positions include 392–394 (GEP), 416–421 (DTWWQT), Asp508, and Arg523. Ser531 is a CoA binding site. An ATP-binding site is contributed by Arg534. Positions 545, 547, and 550 each coordinate Mg(2+). An N6-acetyllysine modification is found at Lys620.

It belongs to the ATP-dependent AMP-binding enzyme family. Mg(2+) is required as a cofactor. Acetylated. Deacetylation by the SIR2-homolog deacetylase activates the enzyme.

It catalyses the reaction acetate + ATP + CoA = acetyl-CoA + AMP + diphosphate. Catalyzes the conversion of acetate into acetyl-CoA (AcCoA), an essential intermediate at the junction of anabolic and catabolic pathways. AcsA undergoes a two-step reaction. In the first half reaction, AcsA combines acetate with ATP to form acetyl-adenylate (AcAMP) intermediate. In the second half reaction, it can then transfer the acetyl group from AcAMP to the sulfhydryl group of CoA, forming the product AcCoA. This is Acetyl-coenzyme A synthetase from Nitrosomonas europaea (strain ATCC 19718 / CIP 103999 / KCTC 2705 / NBRC 14298).